A 1287-amino-acid chain; its full sequence is Cell adhesion molecule-related/down-regulated by oncogenes (1287 aa).

Positions 1–25 (MHPDLGPLCTLLYVTLTILCSSVSS) are cleaved as a signal peptide. At 26–963 (DLAPYFTSEP…PATSPARSSD (938 aa)) the chain is on the extracellular side. Ig-like C2-type domains lie at 29 to 114 (PYFT…ATVS), 120 to 204 (DFGS…LKVE), 225 to 303 (PTHS…KYVT), 310 to 396 (EHAS…GRLE), and 405 to 516 (PVII…ASLM). Cys50 and Cys97 are joined by a disulfide. Residues Asn88, Asn100, Asn180, Asn287, Asn294, Asn342, and Asn427 are each glycosylated (N-linked (GlcNAc...) asparagine). Intrachain disulfides connect Cys141/Cys191 and Cys243/Cys290. Cystine bridges form between Cys333/Cys380 and Cys426/Cys500. A disordered region spans residues 531–553 (LPDAAQNDDRSKRDGSETGLLSS). Basic and acidic residues predominate over residues 537-546 (NDDRSKRDGS). Asn570 carries an N-linked (GlcNAc...) asparagine glycan. Fibronectin type-III domains lie at 579–677 (APII…SKEK), 723–821 (APDR…FPNR), and 826–926 (PITG…TKVK). Asn873 is a glycosylation site (N-linked (GlcNAc...) asparagine). A disordered region spans residues 933–955 (EYPVKDLSTPPNSLGSGGNVGPA). A helical membrane pass occupies residues 964-984 (MLYLIVGCVLGVMVLILMVFI). The Cytoplasmic portion of the chain corresponds to 985-1287 (AMCLWKNRQQ…TEVLQQPRET (303 aa)). Residues 1268-1287 (SPPGIPLDSPTEVLQQPRET) form a disordered region.

Part of a complex that contains BOC, CDON, NEO1, cadherins and CTNNB1. Interacts with NTN3. Interacts with PTCH1. Interacts with GAS1. Interacts with DHH, IHH and SHH. Post-translationally, N-glycosylated.

Its subcellular location is the cell membrane. Functionally, component of a cell-surface receptor complex that mediates cell-cell interactions between muscle precursor cells. Promotes differentiation of myogenic cells. This chain is Cell adhesion molecule-related/down-regulated by oncogenes (CDON), found in Homo sapiens (Human).